Reading from the N-terminus, the 114-residue chain is Protein ORF3 (114 aa).

2 hydrophobic regions span residues 6-22 and 33-53; these read CALG…CLCC and AVVG…GLIL. The interval 28-68 is interaction with host HPX; it reads VSRLAAVVGGAAAVPAVVSGVTGLILSPSQSPIFIQPTPLP. The segment at 72 to 114 is homodimerization, and interaction with host AMBP/bikunin; that stretch reads PLRPGLDLAFANQPGHLAPLGEIRPSAPPLPPVADLPQPGLRR. A disordered region spans residues 91–114; that stretch reads LGEIRPSAPPLPPVADLPQPGLRR. Residues 95 to 104 are interaction with host SRC, HCK, FYN, PIK3R3 and GRB2; the sequence is RPSAPPLPPV. The PTAP/PSAP motif motif lies at 96 to 99; that stretch reads PSAP.

Belongs to the hepevirus ORF3 protein family. Forms homooligomers. Interacts with host SRC, HCK, FYN, PIK3R3 and GRB2 (via SH3 domain); binding does not activate the kinases. Interacts with host AMBP/bikunin and AMBP/alpha-1-microglobulin peptides. Interacts with host HPX/hemopexin. Interacts (when phosphorylated) with capsid protein ORF2. Interacts with host TSG101; this interaction plays a role in viral release from the host cell. Interacts with host SIRPA; this interaction down-regulates the phosphorylation of host IRF3. Palmitoylated in the N-terminus.

The protein resides in the host endoplasmic reticulum membrane. It localises to the host cytoplasm. The protein localises to the host cytoskeleton. Its subcellular location is the virion. It is found in the host cell membrane. Functionally, small multifunctional phosphoprotein involved in virion morphogenesis, egress and counteracting host innate immunity. Plays critical roles in the final steps of viral release by interacting with host TSG101, a member of the vacuolar protein-sorting pathway and using other cellular host proteins involved in vesicle formation pathway. Also acts as a viroporin and forms ion conductive pores allowing viral particle release. Impairs the generation of type I interferon by down-regulating host TLR3 and TLR7 as well as their downstream signaling pathways. Down-regulates the phosphorylation of host IRF3 via the interaction with host SIRP-alpha, thereby inhibiting IFN-I expression. Interacts with host microtubules. This Hepatitis E virus genotype 2 (isolate Human/Mexico) (HEV-2) protein is Protein ORF3.